Consider the following 284-residue polypeptide: 3-methyl-2-oxobutanoate hydroxymethyltransferase (284 aa).

Mg(2+) is bound by residues Asp-52 and Asp-91. 3-methyl-2-oxobutanoate-binding positions include 52–53 (DS), Asp-91, and Lys-121. Glu-123 serves as a coordination point for Mg(2+). Glu-191 functions as the Proton acceptor in the catalytic mechanism.

Belongs to the PanB family. Homodecamer; pentamer of dimers. Mg(2+) is required as a cofactor.

The protein resides in the cytoplasm. It catalyses the reaction 3-methyl-2-oxobutanoate + (6R)-5,10-methylene-5,6,7,8-tetrahydrofolate + H2O = 2-dehydropantoate + (6S)-5,6,7,8-tetrahydrofolate. It functions in the pathway cofactor biosynthesis; (R)-pantothenate biosynthesis; (R)-pantoate from 3-methyl-2-oxobutanoate: step 1/2. Functionally, catalyzes the reversible reaction in which hydroxymethyl group from 5,10-methylenetetrahydrofolate is transferred onto alpha-ketoisovalerate to form ketopantoate. This is 3-methyl-2-oxobutanoate hydroxymethyltransferase from Deinococcus radiodurans (strain ATCC 13939 / DSM 20539 / JCM 16871 / CCUG 27074 / LMG 4051 / NBRC 15346 / NCIMB 9279 / VKM B-1422 / R1).